The primary structure comprises 73 residues: uncharacterized protein (73 aa).

This is an uncharacterized protein from Saccharolobus islandicus (Sulfolobus islandicus).